A 62-amino-acid chain; its full sequence is Ponericin-W-like 32.2 (62 aa).

Residues 1–23 form the signal peptide; the sequence is MKCKKQLLVIFFAYFLVVNESEA. A propeptide spanning residues 49-62 is cleaved from the precursor; it reads RALMKRDLEDIMDP.

The protein belongs to the non-disulfide-bridged peptide (NDBP) superfamily. Medium-length antimicrobial peptide (group 3) family. Ponericin-W subfamily. As to expression, expressed by the venom gland.

It localises to the secreted. The protein localises to the target cell membrane. In terms of biological role, antimicrobial peptide with potent activity against a range of Gram-positive and Gram-negative bacteria. Has high hemolytic activity against erythrocytes. May act by disrupting the integrity of the bacterial cell membrane. This is Ponericin-W-like 32.2 from Lychas mucronatus (Chinese swimming scorpion).